A 266-amino-acid chain; its full sequence is Thymidylate synthase (266 aa).

Arginine 24 is a binding site for dUMP. Residue histidine 54 coordinates (6R)-5,10-methylene-5,6,7,8-tetrahydrofolate. Residue 129–130 (RR) participates in dUMP binding. The active-site Nucleophile is the cysteine 149. DUMP contacts are provided by residues 169 to 172 (RSAD), asparagine 180, and 210 to 212 (HIY). Aspartate 172 contacts (6R)-5,10-methylene-5,6,7,8-tetrahydrofolate. Alanine 265 is a (6R)-5,10-methylene-5,6,7,8-tetrahydrofolate binding site.

This sequence belongs to the thymidylate synthase family. Bacterial-type ThyA subfamily. In terms of assembly, homodimer.

The protein resides in the cytoplasm. The catalysed reaction is dUMP + (6R)-5,10-methylene-5,6,7,8-tetrahydrofolate = 7,8-dihydrofolate + dTMP. The protein operates within pyrimidine metabolism; dTTP biosynthesis. Functionally, catalyzes the reductive methylation of 2'-deoxyuridine-5'-monophosphate (dUMP) to 2'-deoxythymidine-5'-monophosphate (dTMP) while utilizing 5,10-methylenetetrahydrofolate (mTHF) as the methyl donor and reductant in the reaction, yielding dihydrofolate (DHF) as a by-product. This enzymatic reaction provides an intracellular de novo source of dTMP, an essential precursor for DNA biosynthesis. This is Thymidylate synthase from Mycolicibacterium paratuberculosis (strain ATCC BAA-968 / K-10) (Mycobacterium paratuberculosis).